The chain runs to 360 residues: F-box protein SKP2A (360 aa).

One can recognise an F-box domain in the interval isoleucine 25–leucine 71. Residues serine 127–leucine 128, asparagine 149–glycine 152, asparagine 175–glycine 178, and asparagine 202 contribute to the (indol-3-yl)acetate site.

Part of a SCF (ASK-cullin-F-box) protein ligase complex. Interacts with CUL1 (RUB1-modified and non-modified isoforms), SKP1A, SKP1B and ASK18. Recruit DPB and phosphorylated E2FC. Interacts with auxin. Auxin controls the interaction with DPB. In terms of processing, polyubiquitinated and subsequently targeted to proteasome. Auxin promotes this ubiquitination-mediated degradation. In terms of tissue distribution, expressed in embryo, seedlings, hypocotyl, roots, leaves and flowers.

It localises to the nucleus. The protein operates within protein modification; protein ubiquitination. Functionally, component of SCF(SKP2A) E3 ubiquitin ligase complexes, which mediate the ubiquitination and subsequent proteasomal degradation of target proteins (including cell cycle repressors). Acts as an auxin receptor; one active auxin is indole-3-acetate. Regulates the stability of the transcription factors E2FC and DPB, repressors of cell proliferation. Confers increase tolerance to osmotic stress by promoting cell division, especially in meristems. Promotes the formation of lateral root primordia. This is F-box protein SKP2A (SKP2A) from Arabidopsis thaliana (Mouse-ear cress).